We begin with the raw amino-acid sequence, 245 residues long: Ubiquinone/menaquinone biosynthesis C-methyltransferase UbiE (245 aa).

Residues threonine 71, aspartate 92, and 118–119 (DA) contribute to the S-adenosyl-L-methionine site.

This sequence belongs to the class I-like SAM-binding methyltransferase superfamily. MenG/UbiE family.

The catalysed reaction is a 2-demethylmenaquinol + S-adenosyl-L-methionine = a menaquinol + S-adenosyl-L-homocysteine + H(+). It catalyses the reaction a 2-methoxy-6-(all-trans-polyprenyl)benzene-1,4-diol + S-adenosyl-L-methionine = a 5-methoxy-2-methyl-3-(all-trans-polyprenyl)benzene-1,4-diol + S-adenosyl-L-homocysteine + H(+). The protein operates within quinol/quinone metabolism; menaquinone biosynthesis; menaquinol from 1,4-dihydroxy-2-naphthoate: step 2/2. It functions in the pathway cofactor biosynthesis; ubiquinone biosynthesis. Functionally, methyltransferase required for the conversion of demethylmenaquinol (DMKH2) to menaquinol (MKH2) and the conversion of 2-polyprenyl-6-methoxy-1,4-benzoquinol (DDMQH2) to 2-polyprenyl-3-methyl-6-methoxy-1,4-benzoquinol (DMQH2). In Neisseria meningitidis serogroup C (strain 053442), this protein is Ubiquinone/menaquinone biosynthesis C-methyltransferase UbiE.